The sequence spans 611 residues: 4-hydroxy-3-methylbut-2-en-1-yl diphosphate synthase (flavodoxin) (611 aa).

[4Fe-4S] cluster is bound by residues Cys520, Cys523, Cys554, and Glu561.

Belongs to the IspG family. It depends on [4Fe-4S] cluster as a cofactor.

The enzyme catalyses (2E)-4-hydroxy-3-methylbut-2-enyl diphosphate + oxidized [flavodoxin] + H2O + 2 H(+) = 2-C-methyl-D-erythritol 2,4-cyclic diphosphate + reduced [flavodoxin]. It participates in isoprenoid biosynthesis; isopentenyl diphosphate biosynthesis via DXP pathway; isopentenyl diphosphate from 1-deoxy-D-xylulose 5-phosphate: step 5/6. In terms of biological role, converts 2C-methyl-D-erythritol 2,4-cyclodiphosphate (ME-2,4cPP) into 1-hydroxy-2-methyl-2-(E)-butenyl 4-diphosphate. This Parabacteroides distasonis (strain ATCC 8503 / DSM 20701 / CIP 104284 / JCM 5825 / NCTC 11152) protein is 4-hydroxy-3-methylbut-2-en-1-yl diphosphate synthase (flavodoxin).